The sequence spans 259 residues: Leucine-rich repeat-containing protein 3B (259 aa).

The N-terminal stretch at 1–33 (MNLVDLWLSRSLSMCLLLQSFVLMILCFHSASM) is a signal peptide. In terms of domain architecture, LRRNT spans 34-64 (CPKGCLCSSSGGLNVTCSNANLKEIPRDLPP). Asn-47 is a glycosylation site (N-linked (GlcNAc...) asparagine). LRR repeat units follow at residues 65 to 86 (ETVLLYLDSNQITSIPNEIFKD), 89 to 110 (QLRVLNLSKNGIEFIDEHAFKG), and 114 to 135 (TLQTLDLSDNRIQSVHKNAFNN). The N-linked (GlcNAc...) asparagine glycan is linked to Asn-94. One can recognise an LRRCT domain in the interval 145-197 (NPWHCDCTLQQVLRSMASNHETAHNVICKTSVLDEHAGRPFLNAANDADLCNL). Residues 205–225 (AMLVTMFGWFTMVISYVVYYV) form a helical membrane-spanning segment.

This sequence belongs to the LRRC3 family.

The protein resides in the membrane. The polypeptide is Leucine-rich repeat-containing protein 3B (Lrrc3b) (Mus musculus (Mouse)).